Here is a 567-residue protein sequence, read N- to C-terminus: Geranylgeranyl transferase type-2 subunit alpha (567 aa).

PFTA repeat units lie at residues 44–78, 88–122, 124–158, 159–193, 207–241, and 363–397; these read LDES…QLET, LVKA…RLPE, NWTR…QAAV, PPAE…QLHP, VLLK…RADP, and VLQS…ALDP. Serine 98 carries the phosphoserine modification. 5 LRR repeats span residues 442–463, 464–486, 487–508, 509–530, and 534–555; these read EVRV…EQLL, LVTH…AALR, CLEV…TNLP, RLQE…QPLA, and RLVL…LEQL.

This sequence belongs to the protein prenyltransferase subunit alpha family. Heterotrimer composed of RABGGTA, RABGGTB and CHM; within this trimer, RABGGTA and RABGGTB form the catalytic component B, while CHM (component A) mediates peptide substrate binding. The Rab GGTase dimer (RGGT) interacts with CHM (component A) prior to Rab protein binding; the association is stabilized by geranylgeranyl pyrophosphate (GGpp). The CHM:RGGT:Rab complex is destabilized by GGpp. Interacts with non-phosphorylated form of RAB8A; phosphorylation of RAB8A at 'Thr-72' disrupts this interaction.

It carries out the reaction geranylgeranyl diphosphate + L-cysteinyl-[protein] = S-geranylgeranyl-L-cysteinyl-[protein] + diphosphate. With respect to regulation, the enzymatic reaction requires the aid of a Rab escort protein (also called component A), such as CHM. In terms of biological role, catalyzes the transfer of a geranylgeranyl moiety from geranylgeranyl diphosphate to both cysteines of Rab proteins with the C-terminal sequence -XXCC, -XCXC and -CCXX, such as RAB1A, RAB3A, RAB5A and RAB7A. The polypeptide is Geranylgeranyl transferase type-2 subunit alpha (RABGGTA) (Pongo abelii (Sumatran orangutan)).